A 2108-amino-acid chain; its full sequence is Kinesin-like protein KIF26B (2108 aa).

Disordered stretches follow at residues 1–124 (MNSV…PGSD) and 263–287 (KHGS…PTHQ). Residues 40–50 (WYRKAYEESRA) are compositionally biased toward basic and acidic residues. Positions 58 to 98 (GAGSALGSSGTPSPGSGTSSPSSFTGSPGPASPGIGTSSPG) are enriched in low complexity. A compositionally biased stretch (gly residues) spans 99–120 (SLGGSPGFGTGSPGSGSGGGSS). The Kinesin motor domain occupies 450 to 801 (KVKVMLRICS…IQIASRVLRM (352 aa)). Residue 546–553 (GHAKLGKS) participates in ATP binding. 7 disordered regions span residues 805–825 (KTKY…GRMR), 876–917 (SDKE…GKSE), 937–1166 (DGSE…ESKK), 1406–1504 (EPEA…PVTD), 1519–1653 (GLAT…SSSK), 1685–1799 (AESL…ASKL), and 1824–1974 (RAGP…WVDG). The span at 1004-1046 (SHSPVPAAAPAHSPSPASPRSVPGSSSQHSASPLVQSPSLQSS) shows a compositional bias: low complexity. Residues 1424–1461 (RESKENSAKKEMKFEDPWLKREEEVKKETAHPNEEGMM) are compositionally biased toward basic and acidic residues. A compositionally biased stretch (low complexity) spans 1491–1500 (SSSSGEVSAS). Composition is skewed to polar residues over residues 1521-1537 (ATQS…SSSL) and 1611-1628 (RASP…SPLN). Low complexity-rich tracts occupy residues 1713–1730 (SAGT…AGQS) and 1751–1763 (STTK…TKSL). Residues 1781-1795 (PWSTQSLSRNRSSGL) show a composition bias toward polar residues. Over residues 1824 to 1836 (RAGPEAEARGGAL) the composition is skewed to low complexity. Position 1855 is a phosphothreonine (T1855). Composition is skewed to polar residues over residues 1866–1875 (GHGSDNSSVL) and 1907–1925 (ATGS…SSSV). The segment covering 1930 to 1948 (RSLKTPKKRSNPGSQRRRL) has biased composition (basic residues). Residues 1954–1968 (LDTSSPVRKPPNSTG) show a composition bias toward polar residues. S1958 carries the phosphoserine modification.

It belongs to the TRAFAC class myosin-kinesin ATPase superfamily. Kinesin family. KIF26 subfamily. In terms of assembly, interacts with MYH10. Phosphorylation at Thr-1855 and Ser-1958 by CDKs, mainly CDK2 and CDK5, enhances the interaction with NEDD4, polyubiquitination, and subsequent proteasomal degradation. Phosphorylation occurs upon loss of interaction with microtubules. Post-translationally, polyubiquitinated by NEDD4, resulting in proteasomal degradation.

The protein localises to the cytoplasm. Its subcellular location is the cytoskeleton. Functionally, essential for embryonic kidney development. Plays an important role in the compact adhesion between mesenchymal cells adjacent to the ureteric buds, possibly by interacting with MYH10. This could lead to the establishment of the basolateral integrity of the mesenchyme and the polarized expression of ITGA8, which maintains the GDNF expression required for further ureteric bud attraction. Although it seems to lack ATPase activity it is constitutively associated with microtubules. This is Kinesin-like protein KIF26B (KIF26B) from Homo sapiens (Human).